Consider the following 323-residue polypeptide: CYFIP-related Rac1 interactor A (323 aa).

It belongs to the CYRI family.

The protein localises to the membrane. Its function is as follows. May negatively regulate RAC1 signaling and RAC1-driven cytoskeletal remodeling. May regulate chemotaxis, cell migration and epithelial polarization by controlling the polarity, plasticity, duration and extent of protrusions. This Gallus gallus (Chicken) protein is CYFIP-related Rac1 interactor A (CYRIA).